The chain runs to 285 residues: Eukaryotic translation initiation factor 3 subunit J (285 aa).

Disordered stretches follow at residues 1 to 86 (MSWD…QLDE) and 232 to 285 (QARL…DDFM). Acidic residues predominate over residues 22 to 41 (WEDEEDDGPVLESWDVDPEE). A coiled-coil region spans residues 36–81 (DVDPEEEEKKKKEAKLQEAKRKAELKAKEDAEKAKKDAKRKELEQF). Positions 42–86 (EEKKKKEAKLQEAKRKAELKAKEDAEKAKKDAKRKELEQFDQLDE) are enriched in basic and acidic residues. Positions 269 to 285 (DDMDDGQFDDLDDDDFM) are enriched in acidic residues.

This sequence belongs to the eIF-3 subunit J family. In terms of assembly, component of the eukaryotic translation initiation factor 3 (eIF-3) complex.

It localises to the cytoplasm. Functionally, component of the eukaryotic translation initiation factor 3 (eIF-3) complex, which is involved in protein synthesis of a specialized repertoire of mRNAs and, together with other initiation factors, stimulates binding of mRNA and methionyl-tRNAi to the 40S ribosome. The eIF-3 complex specifically targets and initiates translation of a subset of mRNAs involved in cell proliferation. This chain is Eukaryotic translation initiation factor 3 subunit J, found in Candida albicans (strain SC5314 / ATCC MYA-2876) (Yeast).